Reading from the N-terminus, the 606-residue chain is Aspartate--tRNA(Asp/Asn) ligase (606 aa).

Glutamate 187 provides a ligand contact to L-aspartate. Residues 211 to 214 are aspartate; sequence QQFK. Residues arginine 233 and histidine 461 each coordinate L-aspartate. An ATP-binding site is contributed by 233–235; sequence RDE. Glutamate 495 contributes to the ATP binding site. L-aspartate is bound at residue arginine 502. An ATP-binding site is contributed by 547 to 550; that stretch reads GLDR.

The protein belongs to the class-II aminoacyl-tRNA synthetase family. Type 1 subfamily. As to quaternary structure, homodimer.

The protein resides in the cytoplasm. It carries out the reaction tRNA(Asx) + L-aspartate + ATP = L-aspartyl-tRNA(Asx) + AMP + diphosphate. In terms of biological role, aspartyl-tRNA synthetase with relaxed tRNA specificity since it is able to aspartylate not only its cognate tRNA(Asp) but also tRNA(Asn). Reaction proceeds in two steps: L-aspartate is first activated by ATP to form Asp-AMP and then transferred to the acceptor end of tRNA(Asp/Asn). This is Aspartate--tRNA(Asp/Asn) ligase from Chlorobium phaeobacteroides (strain DSM 266 / SMG 266 / 2430).